A 458-amino-acid chain; its full sequence is E3 ubiquitin-protein ligase RNF25 (458 aa).

Residues 18–128 (SEVEVLESIY…EKGKEILTDN (111 aa)) form the RWD domain. Zn(2+) is bound by residues Cys-135, Cys-138, Cys-153, His-155, Cys-161, Cys-197, and Cys-200. The RING-type zinc finger occupies 135–201 (CVICLYGFQE…AVGVQCPVCR (67 aa)). Disordered regions lie at residues 267-299 (PPAPLEPESAIDVSRGSHQPSTLATKPSTTSAT) and 317-458 (KTPG…EDGS). 2 stretches are compositionally biased toward polar residues: residues 282-299 (GSHQPSTLATKPSTTSAT) and 362-372 (LKGTSDTQKLQ). 2 stretches are compositionally biased toward basic and acidic residues: residues 377 to 388 (PLKESMDLKPES) and 412 to 423 (RTRDCAHWERAK). Over residues 432–443 (PRLPRGRGAYRP) the composition is skewed to low complexity.

Belongs to the RNF25 family. In terms of assembly, interacts with UBE2D2, and may also interact with UBE2E1 and UBE2E3. Interacts with RELA/p65. In terms of processing, ubiquitinated; autoubiquitinated.

The protein resides in the cytoplasm. It carries out the reaction S-ubiquitinyl-[E2 ubiquitin-conjugating enzyme]-L-cysteine + [acceptor protein]-L-lysine = [E2 ubiquitin-conjugating enzyme]-L-cysteine + N(6)-ubiquitinyl-[acceptor protein]-L-lysine.. It functions in the pathway protein modification; protein ubiquitination. E3 ubiquitin-protein ligase that plays a key role in the RNF14-RNF25 translation quality control pathway, a pathway that takes place when a ribosome has stalled during translation, and which promotes ubiquitination and degradation of translation factors on stalled ribosomes. Catalyzes ubiquitination of RPS27A in response to ribosome collisions, promoting activation of RNF14. RNF25 catalyzes ubiquitination of other ribosomal proteins on stalled ribosomes, such as RPL0, RPL1, RPL12, RPS13 and RPS17. Also involved in ubiquitination and degradation of stalled ETF1/eRF1. Independently of its function in the response to stalled ribosomes, mediates ubiquitination and subsequent proteasomal degradation of NKD2. May also stimulate transcription mediated by NF-kappa-B via its interaction with RELA/p65. This chain is E3 ubiquitin-protein ligase RNF25 (RNF25), found in Bos taurus (Bovine).